We begin with the raw amino-acid sequence, 95 residues long: Aspartyl/glutamyl-tRNA(Asn/Gln) amidotransferase subunit C (95 aa).

The protein belongs to the GatC family. Heterotrimer of A, B and C subunits.

It carries out the reaction L-glutamyl-tRNA(Gln) + L-glutamine + ATP + H2O = L-glutaminyl-tRNA(Gln) + L-glutamate + ADP + phosphate + H(+). The enzyme catalyses L-aspartyl-tRNA(Asn) + L-glutamine + ATP + H2O = L-asparaginyl-tRNA(Asn) + L-glutamate + ADP + phosphate + 2 H(+). Allows the formation of correctly charged Asn-tRNA(Asn) or Gln-tRNA(Gln) through the transamidation of misacylated Asp-tRNA(Asn) or Glu-tRNA(Gln) in organisms which lack either or both of asparaginyl-tRNA or glutaminyl-tRNA synthetases. The reaction takes place in the presence of glutamine and ATP through an activated phospho-Asp-tRNA(Asn) or phospho-Glu-tRNA(Gln). The polypeptide is Aspartyl/glutamyl-tRNA(Asn/Gln) amidotransferase subunit C (Pseudomonas entomophila (strain L48)).